A 269-amino-acid chain; its full sequence is Formamidopyrimidine-DNA glycosylase (269 aa).

The active-site Schiff-base intermediate with DNA is the Pro-2. Glu-3 serves as the catalytic Proton donor. Lys-57 acts as the Proton donor; for beta-elimination activity in catalysis. Residues His-90, Arg-109, and Lys-150 each contribute to the DNA site. An FPG-type zinc finger spans residues 235-269 (QVYGRKGEPCRVCGTPIVATKHAQRATFYCRHCQK). Catalysis depends on Arg-259, which acts as the Proton donor; for delta-elimination activity.

It belongs to the FPG family. In terms of assembly, monomer. Zn(2+) is required as a cofactor.

It carries out the reaction Hydrolysis of DNA containing ring-opened 7-methylguanine residues, releasing 2,6-diamino-4-hydroxy-5-(N-methyl)formamidopyrimidine.. The enzyme catalyses 2'-deoxyribonucleotide-(2'-deoxyribose 5'-phosphate)-2'-deoxyribonucleotide-DNA = a 3'-end 2'-deoxyribonucleotide-(2,3-dehydro-2,3-deoxyribose 5'-phosphate)-DNA + a 5'-end 5'-phospho-2'-deoxyribonucleoside-DNA + H(+). Involved in base excision repair of DNA damaged by oxidation or by mutagenic agents. Acts as a DNA glycosylase that recognizes and removes damaged bases. Has a preference for oxidized purines, such as 7,8-dihydro-8-oxoguanine (8-oxoG). Has AP (apurinic/apyrimidinic) lyase activity and introduces nicks in the DNA strand. Cleaves the DNA backbone by beta-delta elimination to generate a single-strand break at the site of the removed base with both 3'- and 5'-phosphates. This Salmonella heidelberg (strain SL476) protein is Formamidopyrimidine-DNA glycosylase.